The primary structure comprises 269 residues: tRNA (guanine-N(1)-)-methyltransferase (269 aa).

Residues Gly-115 and 139–144 (LGDYVL) each bind S-adenosyl-L-methionine.

It belongs to the RNA methyltransferase TrmD family. As to quaternary structure, homodimer.

The protein resides in the cytoplasm. The catalysed reaction is guanosine(37) in tRNA + S-adenosyl-L-methionine = N(1)-methylguanosine(37) in tRNA + S-adenosyl-L-homocysteine + H(+). Specifically methylates guanosine-37 in various tRNAs. The protein is tRNA (guanine-N(1)-)-methyltransferase of Pseudarthrobacter chlorophenolicus (strain ATCC 700700 / DSM 12829 / CIP 107037 / JCM 12360 / KCTC 9906 / NCIMB 13794 / A6) (Arthrobacter chlorophenolicus).